The sequence spans 685 residues: Threonine--tRNA ligase (685 aa).

The region spanning 1–65 (MSTPASAAPA…DTDVEVEPVA (65 aa)) is the TGS domain. Residues 262-568 (DHRKLGSELD…LTEHYAGAFP (307 aa)) are catalytic. Zn(2+) contacts are provided by cysteine 367, histidine 418, and histidine 545.

Belongs to the class-II aminoacyl-tRNA synthetase family. In terms of assembly, homodimer. Requires Zn(2+) as cofactor.

Its subcellular location is the cytoplasm. It catalyses the reaction tRNA(Thr) + L-threonine + ATP = L-threonyl-tRNA(Thr) + AMP + diphosphate + H(+). Functionally, catalyzes the attachment of threonine to tRNA(Thr) in a two-step reaction: L-threonine is first activated by ATP to form Thr-AMP and then transferred to the acceptor end of tRNA(Thr). Also edits incorrectly charged L-seryl-tRNA(Thr). This Rhodococcus jostii (strain RHA1) protein is Threonine--tRNA ligase.